The primary structure comprises 170 residues: Large ribosomal subunit protein uL18m (170 aa).

Belongs to the universal ribosomal protein uL18 family. In terms of assembly, component of the mitochondrial ribosome large subunit (39S) which comprises a 16S rRNA and about 50 distinct proteins.

Its subcellular location is the mitochondrion. This Caenorhabditis elegans protein is Large ribosomal subunit protein uL18m (mrpl-18).